Reading from the N-terminus, the 447-residue chain is Sporulation protein YpeB (447 aa).

Belongs to the YpeB family.

Functionally, required for spore cortex hydrolysis during germination. Appears to be required for either expression, localization, activation or function of SleB. This Halalkalibacterium halodurans (strain ATCC BAA-125 / DSM 18197 / FERM 7344 / JCM 9153 / C-125) (Bacillus halodurans) protein is Sporulation protein YpeB.